The sequence spans 132 residues: Small ribosomal subunit protein uS8 (132 aa).

The protein belongs to the universal ribosomal protein uS8 family. Part of the 30S ribosomal subunit. Contacts proteins S5 and S12.

Its function is as follows. One of the primary rRNA binding proteins, it binds directly to 16S rRNA central domain where it helps coordinate assembly of the platform of the 30S subunit. In Geotalea uraniireducens (strain Rf4) (Geobacter uraniireducens), this protein is Small ribosomal subunit protein uS8.